Here is a 227-residue protein sequence, read N- to C-terminus: MTAIAPVITIDGPSGAGKGTLCKAMAEALQWHLLDSGAIYRVLALAALHHHVDVASEDALVPLASHLDVRFISTNGNLEVILEGEDVSGEIRTQEVANAASQVAAFPRVREALLRRQRAFRELPGLIADGRDMGTVVFPDAPVKIFLDASSEERAHRRMLQLQEKGFSVNFERLLAEIKERDDRDRNRAVAPLVPAADALVLDSTTLSIEQVIEKALQYARQKLALA.

12 to 20 provides a ligand contact to ATP; the sequence is GPSGAGKGT.

The protein belongs to the cytidylate kinase family. Type 1 subfamily.

It localises to the cytoplasm. The catalysed reaction is CMP + ATP = CDP + ADP. It catalyses the reaction dCMP + ATP = dCDP + ADP. The polypeptide is Cytidylate kinase (Escherichia fergusonii (strain ATCC 35469 / DSM 13698 / CCUG 18766 / IAM 14443 / JCM 21226 / LMG 7866 / NBRC 102419 / NCTC 12128 / CDC 0568-73)).